Consider the following 1829-residue polypeptide: Afadin (1829 aa).

Residues Phe39–Asp133 enclose the Ras-associating 1 domain. The segment at Lys129–Ser196 is disordered. Positions Glu146 to Arg186 form a coiled coil. The span at Thr160–Arg172 shows a compositional bias: basic residues. A compositionally biased stretch (basic and acidic residues) spans Glu173–Gln189. Ser216, Ser246, and Ser256 each carry phosphoserine. Positions Ser246 to Pro348 constitute a Ras-associating 2 domain. Basic and acidic residues predominate over residues Lys356–Asp371. Residues Lys356–Ser377 are disordered. Residues Ser391 and Ser424 each carry the phosphoserine modification. In terms of domain architecture, FHA spans Phe441–Val507. A phosphoserine mark is found at Ser512, Ser557, Ser562, Ser589, and Ser655. Residues Asp539–Ala595 are disordered. A compositionally biased stretch (basic and acidic residues) spans Ile576–Thr591. The 248-residue stretch at Asn668–Asn915 folds into the Dilute domain. Positions Val1014–Gly1100 constitute a PDZ domain. Ser1090, Ser1114, Ser1133, Ser1147, Ser1150, Ser1179, Ser1180, Ser1189, and Ser1206 each carry phosphoserine. The tract at residues Ser1114–Thr1230 is disordered. Residues Ile1120–Gly1135 are compositionally biased toward basic and acidic residues. Residues Tyr1139–Ser1150 are compositionally biased toward polar residues. A compositionally biased stretch (basic and acidic residues) spans Ser1159–Ser1179. The segment covering Pro1195 to Gln1217 has biased composition (polar residues). Residues Thr1218 and Thr1239 each carry the phosphothreonine modification. Residues Ser1245 and Ser1282 each carry the phosphoserine modification. Positions Glu1300–Ser1309 are enriched in basic and acidic residues. Disordered regions lie at residues Glu1300–Gln1533 and Arg1574–Val1724. The span at Ser1316–Ser1325 shows a compositional bias: low complexity. Over residues Ser1332–Lys1344 the composition is skewed to polar residues. Ser1335 bears the Phosphoserine mark. Thr1337 carries the phosphothreonine modification. The span at Leu1371 to Ala1380 shows a compositional bias: pro residues. The segment covering Asn1401 to Ala1412 has biased composition (low complexity). The span at Ala1413 to Leu1447 shows a compositional bias: basic and acidic residues. Residues Lys1417–Ser1454 adopt a coiled-coil conformation. Positions Met1450–Ala1464 are enriched in polar residues. Positions Thr1494 to Leu1510 are enriched in basic and acidic residues. Ser1506 and Ser1517 each carry phosphoserine. The span at Pro1520–Gln1533 shows a compositional bias: basic and acidic residues. Residues Glu1530–Lys1564 are a coiled coil. Acidic residues predominate over residues Glu1583–Asp1594. Residues Gln1600–Gln1672 adopt a coiled-coil conformation. Basic and acidic residues predominate over residues Leu1602–Glu1682. Ser1701 carries the phosphoserine modification. The segment covering Arg1715 to Val1724 has biased composition (polar residues). Phosphoserine is present on Ser1726. The interval Asp1742 to Lys1829 is disordered. A compositionally biased stretch (polar residues) spans Asn1753–Gly1764. The segment covering Ala1768–Asp1781 has biased composition (basic and acidic residues). Phosphoserine occurs at positions 1779 and 1804. Positions Val1809 to Lys1829 are enriched in basic and acidic residues. Lys1812 bears the N6-acetyllysine mark.

In terms of assembly, homodimer. Interacts with F-actin, nectin and NECTIN3. Essential for the association of nectin and E-cadherin. Isoform 2/s-afadin does not interact with F-actin. Interacts with ZO-1 and occludin, but probably in an indirect manner. Interacts with RIT1, RIT2, NRXN1 and BCR. Interacts with ADAM10; the interaction locks ADAM10 at adherens junctions following ADAM10 recruitment to adherens junctions by TSPAN33. In terms of tissue distribution, isoform 1 is widely expressed, including in heart, brain, spleen, lung, liver, skeletal muscle, kidney and testis. Isoform 2 is mainly expressed in the brain.

It localises to the cell junction. The protein localises to the adherens junction. Functionally, belongs to an adhesion system, probably together with the E-cadherin-catenin system, which plays a role in the organization of homotypic, interneuronal and heterotypic cell-cell adherens junctions (AJs). Nectin- and actin-filament-binding protein that connects nectin to the actin cytoskeleton. May play a key role in the organization of epithelial structures of the embryonic ectoderm. Essential for the organization of adherens junctions. This Rattus norvegicus (Rat) protein is Afadin.